The following is a 275-amino-acid chain: NH(3)-dependent NAD(+) synthetase (275 aa).

Position 47–54 (47–54) interacts with ATP; that stretch reads GISGGQDS. Position 53 (Asp-53) interacts with Mg(2+). Residue Arg-141 coordinates deamido-NAD(+). Thr-161 provides a ligand contact to ATP. Glu-166 contributes to the Mg(2+) binding site. Deamido-NAD(+) contacts are provided by Lys-174 and Asp-181. ATP contacts are provided by Lys-190 and Thr-212. 261 to 262 provides a ligand contact to deamido-NAD(+); sequence HK.

This sequence belongs to the NAD synthetase family. As to quaternary structure, homodimer.

The catalysed reaction is deamido-NAD(+) + NH4(+) + ATP = AMP + diphosphate + NAD(+) + H(+). It participates in cofactor biosynthesis; NAD(+) biosynthesis; NAD(+) from deamido-NAD(+) (ammonia route): step 1/1. Its function is as follows. Catalyzes the ATP-dependent amidation of deamido-NAD to form NAD. Uses ammonia as a nitrogen source. The polypeptide is NH(3)-dependent NAD(+) synthetase (Enterococcus faecalis (strain ATCC 700802 / V583)).